Consider the following 366-residue polypeptide: Ferredoxin--NADP reductase, leaf isozyme 2, chloroplastic (366 aa).

Residues Met-1 to Arg-48 constitute a chloroplast transit peptide. The FAD-binding FR-type domain occupies Lys-87–Met-209. FAD-binding positions include Arg-145–Ser-148, Cys-166–Lys-168, Tyr-172, and Val-183–Ser-185. Residues Ser-148 and Lys-168 each coordinate NADP(+). The cysteines at positions 184 and 189 are disulfide-linked. Position 185 is a phosphoserine (Ser-185). A Phosphothreonine modification is found at Thr-216. Thr-224 is an FAD binding site. Residues Thr-224, Val-256–Pro-257, Ser-286–Arg-287, Lys-296, Gly-325–Leu-326, and Glu-364 each bind NADP(+).

The protein belongs to the ferredoxin--NADP reductase type 1 family. As to quaternary structure, heterodimer with LFNR1. Component of high molecular weight thylakoid LFNRs-containing protein complexes containing LIR1, LFNR1, LFNR2, TIC62 and TROL proteins. Interacts directly with LIR1 and TIC62; LIR1 increases the affinity of LFNR1 and LFNR2 for TIC62. FAD serves as cofactor. Post-translationally, may form interchain disulfide bonds with LIR1.

Its subcellular location is the plastid. The protein localises to the chloroplast stroma. The protein resides in the chloroplast thylakoid membrane. It catalyses the reaction 2 reduced [2Fe-2S]-[ferredoxin] + NADP(+) + H(+) = 2 oxidized [2Fe-2S]-[ferredoxin] + NADPH. Its pathway is energy metabolism; photosynthesis. Its function is as follows. Plays a key role in regulating the relative amounts of cyclic and non-cyclic electron flow to meet the demands of the plant for ATP and reducing power. The protein is Ferredoxin--NADP reductase, leaf isozyme 2, chloroplastic of Oryza sativa subsp. japonica (Rice).